A 258-amino-acid polypeptide reads, in one-letter code: 6-carboxyhexanoate--CoA ligase (258 aa).

This sequence belongs to the BioW family. In terms of assembly, homodimer. Mg(2+) is required as a cofactor.

It catalyses the reaction heptanedioate + ATP + CoA = 6-carboxyhexanoyl-CoA + AMP + diphosphate. The protein operates within metabolic intermediate metabolism; pimeloyl-CoA biosynthesis; pimeloyl-CoA from pimelate: step 1/1. Functionally, catalyzes the transformation of pimelate into pimeloyl-CoA with concomitant hydrolysis of ATP to AMP. The sequence is that of 6-carboxyhexanoate--CoA ligase from Bacillus spizizenii (strain ATCC 23059 / NRRL B-14472 / W23) (Bacillus subtilis subsp. spizizenii).